Consider the following 197-residue polypeptide: Imidazoleglycerol-phosphate dehydratase (197 aa).

The protein belongs to the imidazoleglycerol-phosphate dehydratase family.

It is found in the cytoplasm. The catalysed reaction is D-erythro-1-(imidazol-4-yl)glycerol 3-phosphate = 3-(imidazol-4-yl)-2-oxopropyl phosphate + H2O. Its pathway is amino-acid biosynthesis; L-histidine biosynthesis; L-histidine from 5-phospho-alpha-D-ribose 1-diphosphate: step 6/9. The sequence is that of Imidazoleglycerol-phosphate dehydratase from Nitrobacter hamburgensis (strain DSM 10229 / NCIMB 13809 / X14).